The sequence spans 604 residues: ERAD-associated E3 ubiquitin-protein ligase component HRD3B (604 aa).

An N-terminal signal peptide occupies residues 1-25; the sequence is MRVSGQSIIAISLFTLSLYIHRVQA. A disordered region spans residues 48–69; that stretch reads ESSDFDEFGESEPKSEEELDPG. N78 and N105 each carry an N-linked (GlcNAc...) asparagine glycan. 7 Sel1-like repeats span residues 125-160, 244-274, 279-307, 311-344, 346-380, 464-492, and 498-528; these read PHAQSVMGFVYGIGMMRETSRSKSILHHHFAAAGGN, VAMHKIGLFYYFGLRGLRRDHAKALYWFSKA, LGYLYVKGYGVDKRNYTKAREYFEMAANN, SGHYNLGVLYLKGTGVKKDVRHATKYFFVAANAG, PKAFYQLAKMFHTGVGLTKNLEMATTFYKLVAERG, AALLIGDAYYYGRGTERDFVRAAEAYMYA, and AQAMFNLGYMHEHGEGLPFDLHLAKRYYDQA. Residue N293 is glycosylated (N-linked (GlcNAc...) asparagine).

The protein belongs to the sel-1 family.

Its function is as follows. May be involved in the endoplasmic reticulum (ER) quality control system called ER-associated degradation (ERAD). The protein is ERAD-associated E3 ubiquitin-protein ligase component HRD3B of Arabidopsis thaliana (Mouse-ear cress).